Here is a 372-residue protein sequence, read N- to C-terminus: MEWQAEQAYNHLPPLPLDSKLAELAETLPILKACIPARAALAELKQAGELLPNQGLLINLLPLLEAQGSSEIENIVTTTDKLFQYAQEDSQADPMTKEALRYRTALYQGFTQLSNRPLCVTTALEICSTIKSVQMDVRKVPGTSLTNQATGEVIYTPPAGESVIRDLLSNWEAFLHNQDDVDPLIKMAMAHYQFEAIHPFIDGNGRTGRVLNILYLIDQQLLSAPILYLSRYIVAHKQDYYRLLLNVTTQQEWQPWIIFILNAVEQTAKWTTHKIAAARELIAHTTEYVRQQLPKIYSHELVQVIFEQPYCRIQNLVESGLAKRQTASVYLKQLCDIGVLEEVQSGKEKLFVHPKFVTLMTKDSNQFSRYAL.

Residues 69–74 carry the Inhibitory (S/T)XXXE(G/N) motif motif; sequence SSEIEN. ATP-binding positions include Glu-73, His-198, 203–209, and Tyr-240; that span reads GNGRTGR. The Fido domain maps to 121-262; that stretch reads TTALEICSTI…WQPWIIFILN (142 aa).

As to quaternary structure, homodimer.

The catalysed reaction is L-tyrosyl-[protein] + ATP = O-(5'-adenylyl)-L-tyrosyl-[protein] + diphosphate. The enzyme catalyses L-threonyl-[protein] + ATP = 3-O-(5'-adenylyl)-L-threonyl-[protein] + diphosphate. With respect to regulation, adenylyltransferase activity is inhibited by the inhibitory helix present at the N-terminus: Glu-73 binds ATP and competes with ATP-binding at Arg-209, thereby preventing adenylyltransferase activity. Activation dissociates ATP-binding from Glu-73, allowing ordered binding of the entire ATP moiety with the alpha-phosphate in an orientation that is productive for accepting an incoming target hydroxyl side chain. Functionally, adenylyltransferase that mediates the addition of adenosine 5'-monophosphate (AMP) to specific residues of target proteins. The sequence is that of Protein adenylyltransferase SoFic (fic) from Shewanella oneidensis (strain ATCC 700550 / JCM 31522 / CIP 106686 / LMG 19005 / NCIMB 14063 / MR-1).